The following is a 653-amino-acid chain: Serine/threonine-protein phosphatase with EF-hands 1 (653 aa).

An IQ domain is found at 16–45 (SLRAALIIQNWYRGYKARLKARQHYALTIF). Residues 121-455 (IDLLLEAFKE…PRFFQYQVTK (335 aa)) are catalytic. Residues Asp-172, His-174, Asp-201, and Asn-233 each contribute to the Mn(2+) site. His-234 functions as the Proton donor in the catalytic mechanism. Positions 285 and 403 each coordinate Mn(2+). EF-hand domains follow at residues 483–518 (SRKSDLTRAFQLQDHRKSGKLSVSQWAFCMENILGL), 566–601 (RYRSDLEIIFNAIDTDHSGLISVEEFRAMWKLFSSH), and 606–641 (IDDSQVNKLANIMDLNKDGSIDFNEFLKAFYVVHRY). Ca(2+) contacts are provided by Asp-579, Asp-581, Ser-583, Glu-590, Asp-619, Asn-621, Asp-623, Ser-625, and Glu-630.

It belongs to the PPP phosphatase family. Mn(2+) serves as cofactor. The cofactor is Mg(2+). As to expression, detected in retina and retinal derived Y-79 retinoblastoma cells. Also found in fetal brain.

The enzyme catalyses O-phospho-L-seryl-[protein] + H2O = L-seryl-[protein] + phosphate. It carries out the reaction O-phospho-L-threonyl-[protein] + H2O = L-threonyl-[protein] + phosphate. Activated by calcium. Its function is as follows. May have a role in the recovery or adaptation response of photoreceptors. May have a role in development. This Homo sapiens (Human) protein is Serine/threonine-protein phosphatase with EF-hands 1 (PPEF1).